Consider the following 162-residue polypeptide: NAD(P)H-quinone oxidoreductase subunit N (162 aa).

The protein belongs to the complex I NdhN subunit family. As to quaternary structure, NDH-1 can be composed of about 15 different subunits; different subcomplexes with different compositions have been identified which probably have different functions.

It localises to the cellular thylakoid membrane. It carries out the reaction a plastoquinone + NADH + (n+1) H(+)(in) = a plastoquinol + NAD(+) + n H(+)(out). The catalysed reaction is a plastoquinone + NADPH + (n+1) H(+)(in) = a plastoquinol + NADP(+) + n H(+)(out). In terms of biological role, NDH-1 shuttles electrons from an unknown electron donor, via FMN and iron-sulfur (Fe-S) centers, to quinones in the respiratory and/or the photosynthetic chain. The immediate electron acceptor for the enzyme in this species is believed to be plastoquinone. Couples the redox reaction to proton translocation, and thus conserves the redox energy in a proton gradient. Cyanobacterial NDH-1 also plays a role in inorganic carbon-concentration. The polypeptide is NAD(P)H-quinone oxidoreductase subunit N (Nostoc sp. (strain PCC 7120 / SAG 25.82 / UTEX 2576)).